Here is a 527-residue protein sequence, read N- to C-terminus: Methane monooxygenase component A alpha chain (527 aa).

Residues glutamate 114, glutamate 144, and histidine 147 each coordinate Fe cation. The active site involves cysteine 151. Residues glutamate 209, glutamate 243, and histidine 246 each contribute to the Fe cation site.

Belongs to the TmoA/XamoA family. In terms of assembly, m.capsulatus has two forms of methane monooxygenase, a soluble and a membrane-bound type. The soluble type consists of four components (A to D): protein A, comprising three chains, in an alpha-2, beta-2, gamma-2 configuration, is a nonheme iron protein containing an unusual mu-hydroxo bridge structure at its active site and interacts with both oxygen and methane. It depends on Fe cation as a cofactor.

The enzyme catalyses methane + NADH + O2 + H(+) = methanol + NAD(+) + H2O. It carries out the reaction methane + NADPH + O2 + H(+) = methanol + NADP(+) + H2O. Its function is as follows. Responsible for the initial oxygenation of methane to methanol in methanotrophs. It also catalyzes the monohydroxylation of a variety of unactivated alkenes, alicyclic, aromatic and heterocyclic compounds. In Methylococcus capsulatus (strain ATCC 33009 / NCIMB 11132 / Bath), this protein is Methane monooxygenase component A alpha chain (mmoX).